A 417-amino-acid polypeptide reads, in one-letter code: Phosphoglycerate kinase 2 (417 aa).

The residue at position 2 (S2) is an N-acetylserine. Phosphoserine is present on residues S2 and S4. K11 carries the N6-acetyllysine modification. The (2R)-3-phosphoglycerate site is built by V23, D24, F25, N26, Q38, and R39. Position 48 is an N6-acetyllysine (K48). (2R)-3-phosphoglycerate contacts are provided by S62, H63, G65, and R66. N6-acetyllysine is present on residues K75, K86, and K97. Residues L122 and R123 each contribute to the (2R)-3-phosphoglycerate site. 2 positions are modified to N6-acetyllysine: K131 and K146. (2R)-3-phosphoglycerate-binding residues include H170 and R171. The residue at position 196 (Y196) is a Phosphotyrosine. Position 199 is an N6-acetyllysine (K199). An ADP-binding site is contributed by G214. Residue G214 coordinates CDP. Residues A215 and K216 each contribute to the AMP site. Residue A215 coordinates ATP. A215 serves as a coordination point for Mg(2+). The Mg(2+) site is built by A218 and D219. Position 219 (D219) interacts with CDP. K220 is an AMP binding site. An ATP-binding site is contributed by K220. G238 serves as a coordination point for ADP. G238 lines the CDP pocket. G239 provides a ligand contact to AMP. Residue G239 participates in ATP binding. N6-acetyllysine occurs at positions 267 and 291. Residue G313 coordinates AMP. G313 contributes to the ATP binding site. CDP is bound by residues G338 and F343. F343 provides a ligand contact to ADP. AMP is bound at residue E344. ATP contacts are provided by E344, D375, and T376. D375 is a binding site for Mg(2+).

Belongs to the phosphoglycerate kinase family. Monomer. It depends on Mg(2+) as a cofactor. In terms of tissue distribution, mainly found in round spermatids. Localized on the principle piece in the sperm (at protein level). Testis-specific. Expression significantly decreased in the testis of elderly men.

It is found in the cytoplasm. The catalysed reaction is (2R)-3-phosphoglycerate + ATP = (2R)-3-phospho-glyceroyl phosphate + ADP. It functions in the pathway carbohydrate degradation; glycolysis; pyruvate from D-glyceraldehyde 3-phosphate: step 2/5. In terms of biological role, essential for sperm motility and male fertility. Not required for the completion of spermatogenesis. In Homo sapiens (Human), this protein is Phosphoglycerate kinase 2 (PGK2).